Here is a 927-residue protein sequence, read N- to C-terminus: MAWLRLQPLTSAFLHFGLVTFVLFLNGLRAEAGDLRDVPSAGQNNESCSGSSDCKEGVILPIWYPENPSLGDKIARVIVYFVALIYMFLGVSIIADRFMASIEVITSQEREVTIKKPNGETSTTTIRVWNETVSNLTLMALGSSAPEILLSLIEVCGHGFIAGDLGPSTIVGSAAFNMFIIIGICVYVIPDGETRKIKHLRVFFVTAAWSVFAYIWLYMILAVFSPGVVQVWEGLLTLFFFPVCVLLAWVADKRLLFYKYMHKRYRTDKHRGIIIETEGEHPKGIEMDGKMMNSHFLDGNLIPLEGKEVDESRREMIRILKDLKQKHPEKDLDQLVEMANYYALSHQQKSRAFYRIQATRMMTGAGNILKKHAAEQAKKTASMSEVHTDEPEDFASKVFFDPCSYQCLENCGAVLLTVVRKGGDISKTMYVDYKTEDGSANAGADYEFTEGTVVLKPGETQKEFSVGIIDDDIFEEDEHFFVRLSNVRVEEEQLEEGMTPAILNSLPLPRAVLASPCVATVTILDDDHAGIFTFECDTIHVSESIGVMEVKVLRTSGARGTVIVPFRTVEGTAKGGGEDFEDTYGELEFKNDETVKTIRVKIVDEEEYERQENFFIALGEPKWMERGISALLLSPEVTDRKLTMEEEEAKRIAEMGKPVLGEHPKLEVIIEESYEFKSTVDKLIKKTNLALVVGTHSWRDQFMEAITVSAAGDEEEDESGEERLPSCFDYVMHFLTVFWKVLFACVPPTEYCHGWACFVVSILIIGMLTAIIGDLASHFGCTIGLKDSVTAVVFVAFGTSVPDTFASKAAALQDVYADASIGNVTGSNAVNVFLGIGLAWSVAAIYWAMQGQEFHVSAGTLAFSVTLFTIFAFVCLSVLLYRRRPHLGGELGGPRGCKLATTWLFVSLWLLYVLFATLEAYCYIKGF.

Positions 1 to 30 (MAWLRLQPLTSAFLHFGLVTFVLFLNGLRA) are cleaved as a signal peptide. Residues 31 to 73 (EAGDLRDVPSAGQNNESCSGSSDCKEGVILPIWYPENPSLGDK) are Extracellular-facing. The N-linked (GlcNAc...) asparagine glycan is linked to Asn45. The helical transmembrane segment at 74–94 (IARVIVYFVALIYMFLGVSII) threads the bilayer. Residues 95-147 (ADRFMASIEVITSQEREVTIKKPNGETSTTTIRVWNETVSNLTLMALGSSAPE) are Cytoplasmic-facing. One copy of the Alpha-1 repeat lies at 140–180 (ALGSSAPEILLSLIEVCGHGFIAGDLGPSTIVGSAAFNMFI). The chain crosses the membrane as a helical span at residues 148 to 168 (ILLSLIEVCGHGFIAGDLGPS). Position 169 (Thr169) is a topological domain, extracellular. Residues 170–190 (IVGSAAFNMFIIIGICVYVIP) form a helical membrane-spanning segment. Topologically, residues 191–202 (DGETRKIKHLRV) are cytoplasmic. A helical transmembrane segment spans residues 203–223 (FFVTAAWSVFAYIWLYMILAV). The Extracellular segment spans residues 224–230 (FSPGVVQ). Residues 231–251 (VWEGLLTLFFFPVCVLLAWVA) traverse the membrane as a helical segment. At 252–726 (DKRLLFYKYM…DESGEERLPS (475 aa)) the chain is on the cytoplasmic side. The segment at 253 to 272 (KRLLFYKYMHKRYRTDKHRG) is putative calmodulin-binding region. 2 Calx-beta domains span residues 386–485 (VHTD…VRLS) and 519–619 (ATVT…IALG). Ca(2+) is bound by residues Glu409, Asp445, Asp470, Asp471, Ile473, Glu475, Glu478, Asp525, Asp526, Asp527, Glu543, Asp579, Glu606, Glu607, and Glu672. A helical membrane pass occupies residues 727–747 (CFDYVMHFLTVFWKVLFACVP). Residues 748-754 (PTEYCHG) lie on the Extracellular side of the membrane. Residues 755–775 (WACFVVSILIIGMLTAIIGDL) form a helical membrane-spanning segment. The Cytoplasmic segment spans residues 776-778 (ASH). Residues 779 to 799 (FGCTIGLKDSVTAVVFVAFGT) form a helical membrane-spanning segment. The stretch at 796–832 (AFGTSVPDTFASKAAALQDVYADASIGNVTGSNAVNV) is one Alpha-2 repeat. At 800–828 (SVPDTFASKAAALQDVYADASIGNVTGSN) the chain is on the extracellular side. A glycan (N-linked (GlcNAc...) asparagine) is linked at Asn823. Residues 829–849 (AVNVFLGIGLAWSVAAIYWAM) traverse the membrane as a helical segment. Residues 850–860 (QGQEFHVSAGT) are Cytoplasmic-facing. A helical membrane pass occupies residues 861 to 881 (LAFSVTLFTIFAFVCLSVLLY). Residues 882–903 (RRRPHLGGELGGPRGCKLATTW) are Extracellular-facing. The chain crosses the membrane as a helical span at residues 904–924 (LFVSLWLLYVLFATLEAYCYI). Topologically, residues 925-927 (KGF) are cytoplasmic.

The protein belongs to the Ca(2+):cation antiporter (CaCA) (TC 2.A.19) family. SLC8 subfamily. In terms of assembly, interacts with AKAP1. As to expression, detected in neurons in brain cortex and hippocampus. Detected in pyramidal cell bodies and processes, in granule cells and interneurons in the CA1 and CA3 region of the hippocampus. Detected on astrocyte processes in brain cortex. Detected on endothelial cells in hippocampus capillaries (at protein level). Restricted to brain and skeletal muscle.

It is found in the cell membrane. Its subcellular location is the perikaryon. The protein resides in the cell projection. It localises to the dendrite. The protein localises to the dendritic spine. It is found in the sarcolemma. Its subcellular location is the cytoplasm. The protein resides in the sarcoplasm. It localises to the cell junction. The protein localises to the mitochondrion outer membrane. It is found in the endoplasmic reticulum membrane. Its subcellular location is the perinuclear region. The enzyme catalyses Ca(2+)(in) + 3 Na(+)(out) = Ca(2+)(out) + 3 Na(+)(in). Its activity is regulated as follows. Calcium transport is down-regulated by Na(+) and stimulated by Ca(2+). Functionally, mediates the electrogenic exchange of Ca(2+) against Na(+) ions across the cell membrane, and thereby contributes to the regulation of cytoplasmic Ca(2+) levels and Ca(2+)-dependent cellular processes. Contributes to cellular Ca(2+) homeostasis in excitable cells, both in muscle and in brain. In a first phase, voltage-gated channels mediate the rapid increase of cytoplasmic Ca(2+) levels due to release of Ca(2+) stores from the endoplasmic reticulum. SLC8A3 mediates the export of Ca(2+) from the cell during the next phase, so that cytoplasmic Ca(2+) levels rapidly return to baseline. Contributes to Ca(2+) transport during excitation-contraction coupling in muscle. In neurons, contributes to the rapid decrease of cytoplasmic Ca(2+) levels back to baseline after neuronal activation, and thereby contributes to modulate synaptic plasticity, learning and memory. Required for normal oligodendrocyte differentiation and for normal myelination. Mediates Ca(2+) efflux from mitochondria and contributes to mitochondrial Ca(2+) ion homeostasis. This chain is Sodium/calcium exchanger 3 (Slc8a3), found in Rattus norvegicus (Rat).